The sequence spans 286 residues: MASYKFKTQNSFLLLLSISFFFLLLLNKVNSTGSLSFSFPKFKHSQPDLIFQSDALVTSKGVLQLTTVNDGRPVYDSIGRVLYAAPFQIWDSTTGNVASFVTSFSFIIKAPNEGKTADGLVFFLAPVGSTQPLKGGGLLGLFKDESYNKSNQIVAVEFDTFRNVAWDPNGIHMGIDVNSIQSVRTVRWDWANGEVANVFISYEASTKSLTASLVYPSLEKSFILSAIVDLKKVLPEWVRVGFTATTGLSEDYVQTNDVLSWSFESNLPGGNSVASVKNAGLSTYAA.

The signal sequence occupies residues 1-31 (MASYKFKTQNSFLLLLSISFFFLLLLNKVNS). N-linked (GlcNAc...) asparagine glycosylation is present at asparagine 148. The Mn(2+) site is built by glutamate 157 and aspartate 159. Residues aspartate 159, asparagine 163, and aspartate 167 each coordinate Ca(2+). The Mn(2+) site is built by aspartate 167 and histidine 172.

This sequence belongs to the leguminous lectin family. RPbAI is composed of two polypeptides, A and B, that associate into five different tetrameric isolectins. The A4 combination is the only one devoid of agglutination activity. Isoform B4 displays maximal agglutination activity. Mostly in the axial and ray parenchymal cells of the inner bark. Fewer in the axial and ray parenchymal cells of the xylem. Strong expression in bark. The lectin accumulates in the inner bark in autumn and winter and disappears in may.

Bark lectins are storage proteins that probably maintain stocks of nitrogen during dormant period. Self-aggregatable molecules that can bind their own carbohydrate side chains. They could also play a role in the plant's defense against phytophagous invertebrates or herbivorous higher animals. This is Bark agglutinin I polypeptide B from Robinia pseudoacacia (Black locust).